The chain runs to 434 residues: MYKRYKDVSLILKIVIGIIVGAVLGVMVPSWSFIDVLGKLFVGALKAIAPLLVFLLIMSAISKYRSGAKNHFGTVIVLYLSATLFSSIAAVAVSYLFPIKLVLPGAMKIAESAPKDLGTVVTSLLTNAVANPISALVEGNYLAILFWSLLIGSGLRLTSAVTKKVVTELADTVSAVAQNVIQFAPFGIVGLLHESLSKTGVKGVMAYGQLLMLLVATMVFVYLVVYPFMVWLMTRQNPYPLTFWTLKVSGIPAFFTRSGAVNIPINLKASKDLGLNEESYAISIPLGGSANSGGAAITVSIMTLATANTMGVHVSIFLALLLCFLSAISATGVSGIAGGSLLLIPMAASLFGISNDIAMQVVGIGFIIGVVQDSVETAVNSASDLLFTATAEYADDRREGHPVDIRAKVKAAGKGTAEVVTPEKANEAEESEQV.

The next 9 helical transmembrane spans lie at Ile14 to Ile34, Phe41 to Ile61, Phe72 to Ala92, Ala135 to Leu155, Thr172 to Leu192, Leu210 to Val230, Ile282 to Met302, Ile316 to Ile336, and Phe351 to Val371. The tract at residues Lys414–Val434 is disordered.

The protein belongs to the dicarboxylate/amino acid:cation symporter (DAACS) (TC 2.A.23) family.

Its subcellular location is the cell membrane. It carries out the reaction L-serine(in) + Na(+)(in) = L-serine(out) + Na(+)(out). The catalysed reaction is L-threonine(in) + Na(+)(in) = L-threonine(out) + Na(+)(out). Its function is as follows. Involved in the import of serine and threonine into the cell, with the concomitant import of sodium (symport system). In Lacticaseibacillus paracasei (strain ATCC 334 / BCRC 17002 / CCUG 31169 / CIP 107868 / KCTC 3260 / NRRL B-441) (Lactobacillus paracasei), this protein is Serine/threonine transporter SstT.